Consider the following 314-residue polypeptide: 4-hydroxy-3-methylbut-2-enyl diphosphate reductase (314 aa).

Cysteine 12 serves as a coordination point for [4Fe-4S] cluster. Positions 41 and 74 each coordinate (2E)-4-hydroxy-3-methylbut-2-enyl diphosphate. 2 residues coordinate dimethylallyl diphosphate: histidine 41 and histidine 74. Isopentenyl diphosphate is bound by residues histidine 41 and histidine 74. Position 96 (cysteine 96) interacts with [4Fe-4S] cluster. Histidine 124 is a binding site for (2E)-4-hydroxy-3-methylbut-2-enyl diphosphate. Histidine 124 is a dimethylallyl diphosphate binding site. Isopentenyl diphosphate is bound at residue histidine 124. The Proton donor role is filled by glutamate 126. Threonine 167 lines the (2E)-4-hydroxy-3-methylbut-2-enyl diphosphate pocket. Cysteine 197 contributes to the [4Fe-4S] cluster binding site. (2E)-4-hydroxy-3-methylbut-2-enyl diphosphate contacts are provided by serine 225, serine 226, asparagine 227, and serine 269. Dimethylallyl diphosphate contacts are provided by serine 225, serine 226, asparagine 227, and serine 269. 4 residues coordinate isopentenyl diphosphate: serine 225, serine 226, asparagine 227, and serine 269.

The protein belongs to the IspH family. Requires [4Fe-4S] cluster as cofactor.

It catalyses the reaction isopentenyl diphosphate + 2 oxidized [2Fe-2S]-[ferredoxin] + H2O = (2E)-4-hydroxy-3-methylbut-2-enyl diphosphate + 2 reduced [2Fe-2S]-[ferredoxin] + 2 H(+). It carries out the reaction dimethylallyl diphosphate + 2 oxidized [2Fe-2S]-[ferredoxin] + H2O = (2E)-4-hydroxy-3-methylbut-2-enyl diphosphate + 2 reduced [2Fe-2S]-[ferredoxin] + 2 H(+). It participates in isoprenoid biosynthesis; dimethylallyl diphosphate biosynthesis; dimethylallyl diphosphate from (2E)-4-hydroxy-3-methylbutenyl diphosphate: step 1/1. It functions in the pathway isoprenoid biosynthesis; isopentenyl diphosphate biosynthesis via DXP pathway; isopentenyl diphosphate from 1-deoxy-D-xylulose 5-phosphate: step 6/6. Catalyzes the conversion of 1-hydroxy-2-methyl-2-(E)-butenyl 4-diphosphate (HMBPP) into a mixture of isopentenyl diphosphate (IPP) and dimethylallyl diphosphate (DMAPP). Acts in the terminal step of the DOXP/MEP pathway for isoprenoid precursor biosynthesis. This is 4-hydroxy-3-methylbut-2-enyl diphosphate reductase from Haemophilus ducreyi (strain 35000HP / ATCC 700724).